A 517-amino-acid chain; its full sequence is Aspartyl/glutamyl-tRNA(Asn/Gln) amidotransferase subunit B (517 aa).

This sequence belongs to the GatB/GatE family. GatB subfamily. As to quaternary structure, heterotrimer of A, B and C subunits.

The enzyme catalyses L-glutamyl-tRNA(Gln) + L-glutamine + ATP + H2O = L-glutaminyl-tRNA(Gln) + L-glutamate + ADP + phosphate + H(+). It carries out the reaction L-aspartyl-tRNA(Asn) + L-glutamine + ATP + H2O = L-asparaginyl-tRNA(Asn) + L-glutamate + ADP + phosphate + 2 H(+). Functionally, allows the formation of correctly charged Asn-tRNA(Asn) or Gln-tRNA(Gln) through the transamidation of misacylated Asp-tRNA(Asn) or Glu-tRNA(Gln) in organisms which lack either or both of asparaginyl-tRNA or glutaminyl-tRNA synthetases. The reaction takes place in the presence of glutamine and ATP through an activated phospho-Asp-tRNA(Asn) or phospho-Glu-tRNA(Gln). This is Aspartyl/glutamyl-tRNA(Asn/Gln) amidotransferase subunit B from Thermobifida fusca (strain YX).